The chain runs to 377 residues: Lipoyl synthase, mitochondrial (377 aa).

The [4Fe-4S] cluster site is built by Cys103, Cys108, Cys114, Cys134, Cys138, Cys141, and Ser349. The 220-residue stretch at 119 to 338 (EHGTQTATIM…EERGNELGFL (220 aa)) folds into the Radical SAM core domain.

This sequence belongs to the radical SAM superfamily. Lipoyl synthase family. The cofactor is [4Fe-4S] cluster.

The protein resides in the mitochondrion. It carries out the reaction [[Fe-S] cluster scaffold protein carrying a second [4Fe-4S](2+) cluster] + N(6)-octanoyl-L-lysyl-[protein] + 2 oxidized [2Fe-2S]-[ferredoxin] + 2 S-adenosyl-L-methionine + 4 H(+) = [[Fe-S] cluster scaffold protein] + N(6)-[(R)-dihydrolipoyl]-L-lysyl-[protein] + 4 Fe(3+) + 2 hydrogen sulfide + 2 5'-deoxyadenosine + 2 L-methionine + 2 reduced [2Fe-2S]-[ferredoxin]. It participates in protein modification; protein lipoylation via endogenous pathway; protein N(6)-(lipoyl)lysine from octanoyl-[acyl-carrier-protein]: step 2/2. Catalyzes the radical-mediated insertion of two sulfur atoms into the C-6 and C-8 positions of the octanoyl moiety bound to the lipoyl domains of lipoate-dependent enzymes, thereby converting the octanoylated domains into lipoylated derivatives. The chain is Lipoyl synthase, mitochondrial from Drosophila sechellia (Fruit fly).